Reading from the N-terminus, the 1105-residue chain is ATP-dependent DNA helicase MPH1 (1105 aa).

Positions 94–261 (IVQRAFYDNL…EIIDNLSISK (168 aa)) constitute a Helicase ATP-binding domain. 107–114 (LPTGLGKT) contacts ATP. The DEAH box signature appears at 209–212 (DEAH). In terms of domain architecture, Helicase C-terminal spans 468–641 (SIERIGSNLR…LITLAQSNRI (174 aa)). 5 disordered regions span residues 493–534 (EEAY…AQIK), 684–708 (KGKK…EKRF), 758–824 (IQSK…PKLG), 850–880 (LVTG…ECAP), and 918–953 (VSDD…FDEG). A compositionally biased stretch (basic residues) spans 499–511 (KGKKGRTKGKATK). A compositionally biased stretch (basic and acidic residues) spans 518 to 532 (TPERSTSRTSSEDAQ). Residues 684–705 (KGKKVTKSKSKSKSNSKSKKIE) are compositionally biased toward basic residues. The segment covering 764–787 (PVKENQSKRPNSEHICEEDSRQET) has biased composition (basic and acidic residues). Over residues 788-799 (ENNSNESNGSFE) the composition is skewed to low complexity. Residues 927–943 (DSINNQQLHKNKNLGST) are compositionally biased toward polar residues. Acidic residues predominate over residues 944 to 953 (SDDDDAFDEG).

This sequence belongs to the DEAD box helicase family. DEAH subfamily. FANCM sub-subfamily. As to quaternary structure, interacts with the MHF histone-fold complex to form the FANCM-MHF complex.

It localises to the nucleus. The enzyme catalyses ATP + H2O = ADP + phosphate + H(+). Functionally, ATP-dependent DNA helicase involved in DNA damage repair by homologous recombination and in genome maintenance. Capable of unwinding D-loops. Plays a role in limiting crossover recombinants during mitotic DNA double-strand break (DSB) repair. Component of a FANCM-MHF complex which promotes gene conversion at blocked replication forks, probably by reversal of the stalled fork. This chain is ATP-dependent DNA helicase MPH1, found in Debaryomyces hansenii (strain ATCC 36239 / CBS 767 / BCRC 21394 / JCM 1990 / NBRC 0083 / IGC 2968) (Yeast).